The primary structure comprises 608 residues: Threonine--tRNA ligase (608 aa).

Residues 1–144 (MRILLIHSDY…SRTITAEEEE (144 aa)) form an editing domain region. The segment at 195–489 (PHVKLMREKE…ELDEKAPMLP (295 aa)) is catalytic. Residues cysteine 286, histidine 338, and histidine 459 each coordinate Zn(2+).

Belongs to the class-II aminoacyl-tRNA synthetase family. As to quaternary structure, homodimer. Zn(2+) is required as a cofactor.

It is found in the cytoplasm. The catalysed reaction is tRNA(Thr) + L-threonine + ATP = L-threonyl-tRNA(Thr) + AMP + diphosphate + H(+). Its function is as follows. Catalyzes the attachment of threonine to tRNA(Thr) in a two-step reaction: L-threonine is first activated by ATP to form Thr-AMP and then transferred to the acceptor end of tRNA(Thr). Also edits incorrectly charged L-seryl-tRNA(Thr). This Methanobrevibacter smithii (strain ATCC 35061 / DSM 861 / OCM 144 / PS) protein is Threonine--tRNA ligase.